Consider the following 227-residue polypeptide: Phosphoribosylformylglycinamidine synthase subunit PurQ (227 aa).

In terms of domain architecture, Glutamine amidotransferase type-1 spans 3-225 (FAVIVFPGSN…LKQWRETYVV (223 aa)). Cys-86 serves as the catalytic Nucleophile. Residues His-194 and Glu-196 contribute to the active site.

In terms of assembly, part of the FGAM synthase complex composed of 1 PurL, 1 PurQ and 2 PurS subunits.

Its subcellular location is the cytoplasm. The catalysed reaction is N(2)-formyl-N(1)-(5-phospho-beta-D-ribosyl)glycinamide + L-glutamine + ATP + H2O = 2-formamido-N(1)-(5-O-phospho-beta-D-ribosyl)acetamidine + L-glutamate + ADP + phosphate + H(+). It catalyses the reaction L-glutamine + H2O = L-glutamate + NH4(+). It functions in the pathway purine metabolism; IMP biosynthesis via de novo pathway; 5-amino-1-(5-phospho-D-ribosyl)imidazole from N(2)-formyl-N(1)-(5-phospho-D-ribosyl)glycinamide: step 1/2. Part of the phosphoribosylformylglycinamidine synthase complex involved in the purines biosynthetic pathway. Catalyzes the ATP-dependent conversion of formylglycinamide ribonucleotide (FGAR) and glutamine to yield formylglycinamidine ribonucleotide (FGAM) and glutamate. The FGAM synthase complex is composed of three subunits. PurQ produces an ammonia molecule by converting glutamine to glutamate. PurL transfers the ammonia molecule to FGAR to form FGAM in an ATP-dependent manner. PurS interacts with PurQ and PurL and is thought to assist in the transfer of the ammonia molecule from PurQ to PurL. This chain is Phosphoribosylformylglycinamidine synthase subunit PurQ, found in Bacillus cereus (strain B4264).